The chain runs to 104 residues: Large ribosomal subunit protein uL24 (104 aa).

This sequence belongs to the universal ribosomal protein uL24 family. Part of the 50S ribosomal subunit.

In terms of biological role, one of two assembly initiator proteins, it binds directly to the 5'-end of the 23S rRNA, where it nucleates assembly of the 50S subunit. Its function is as follows. One of the proteins that surrounds the polypeptide exit tunnel on the outside of the subunit. This is Large ribosomal subunit protein uL24 from Dichelobacter nodosus (strain VCS1703A).